We begin with the raw amino-acid sequence, 91 residues long: Small ribosomal subunit protein uS19 (91 aa).

The protein belongs to the universal ribosomal protein uS19 family.

Functionally, protein S19 forms a complex with S13 that binds strongly to the 16S ribosomal RNA. This chain is Small ribosomal subunit protein uS19, found in Leptothrix cholodnii (strain ATCC 51168 / LMG 8142 / SP-6) (Leptothrix discophora (strain SP-6)).